The primary structure comprises 190 residues: Putative acetyltransferase DDB_G0275913 (190 aa).

Belongs to the transferase hexapeptide repeat family.

The polypeptide is Putative acetyltransferase DDB_G0275913 (Dictyostelium discoideum (Social amoeba)).